Reading from the N-terminus, the 379-residue chain is Cytochrome b (379 aa).

The next 4 membrane-spanning stretches (helical) occupy residues phenylalanine 33–methionine 53, tryptophan 77–valine 98, tryptophan 113–leucine 133, and phenylalanine 178–leucine 198. Heme b-binding residues include histidine 83 and histidine 97. Heme b contacts are provided by histidine 182 and histidine 196. Histidine 201 contributes to the a ubiquinone binding site. The next 4 membrane-spanning stretches (helical) occupy residues threonine 226–phenylalanine 246, leucine 288–asparagine 308, valine 320–glycine 340, and phenylalanine 347–proline 367.

This sequence belongs to the cytochrome b family. As to quaternary structure, the cytochrome bc1 complex contains 11 subunits: 3 respiratory subunits (MT-CYB, CYC1 and UQCRFS1), 2 core proteins (UQCRC1 and UQCRC2) and 6 low-molecular weight proteins (UQCRH/QCR6, UQCRB/QCR7, UQCRQ/QCR8, UQCR10/QCR9, UQCR11/QCR10 and a cleavage product of UQCRFS1). This cytochrome bc1 complex then forms a dimer. Requires heme b as cofactor.

The protein resides in the mitochondrion inner membrane. Component of the ubiquinol-cytochrome c reductase complex (complex III or cytochrome b-c1 complex) that is part of the mitochondrial respiratory chain. The b-c1 complex mediates electron transfer from ubiquinol to cytochrome c. Contributes to the generation of a proton gradient across the mitochondrial membrane that is then used for ATP synthesis. This Akodon fumeus (Smoky grass mouse) protein is Cytochrome b (MT-CYB).